A 527-amino-acid polypeptide reads, in one-letter code: Bifunctional purine biosynthesis protein PurH (527 aa).

Residues Met1–Thr149 form the MGS-like domain.

It belongs to the PurH family.

The enzyme catalyses (6R)-10-formyltetrahydrofolate + 5-amino-1-(5-phospho-beta-D-ribosyl)imidazole-4-carboxamide = 5-formamido-1-(5-phospho-D-ribosyl)imidazole-4-carboxamide + (6S)-5,6,7,8-tetrahydrofolate. It catalyses the reaction IMP + H2O = 5-formamido-1-(5-phospho-D-ribosyl)imidazole-4-carboxamide. It participates in purine metabolism; IMP biosynthesis via de novo pathway; 5-formamido-1-(5-phospho-D-ribosyl)imidazole-4-carboxamide from 5-amino-1-(5-phospho-D-ribosyl)imidazole-4-carboxamide (10-formyl THF route): step 1/1. The protein operates within purine metabolism; IMP biosynthesis via de novo pathway; IMP from 5-formamido-1-(5-phospho-D-ribosyl)imidazole-4-carboxamide: step 1/1. The sequence is that of Bifunctional purine biosynthesis protein PurH from Xanthomonas oryzae pv. oryzae (strain KACC10331 / KXO85).